The chain runs to 333 residues: uncharacterized protein (333 aa).

It to E.coli YfeH.

This is an uncharacterized protein from Pseudomonas aeruginosa (strain ATCC 15692 / DSM 22644 / CIP 104116 / JCM 14847 / LMG 12228 / 1C / PRS 101 / PAO1).